Consider the following 362-residue polypeptide: Chorismate synthase (362 aa).

Arg-47 is a binding site for NADP(+). FMN-binding positions include 124-126 (RAS), Gly-286, 301-305 (KPTAT), and Arg-327.

This sequence belongs to the chorismate synthase family. Homotetramer. Requires FMNH2 as cofactor.

It carries out the reaction 5-O-(1-carboxyvinyl)-3-phosphoshikimate = chorismate + phosphate. Its pathway is metabolic intermediate biosynthesis; chorismate biosynthesis; chorismate from D-erythrose 4-phosphate and phosphoenolpyruvate: step 7/7. In terms of biological role, catalyzes the anti-1,4-elimination of the C-3 phosphate and the C-6 proR hydrogen from 5-enolpyruvylshikimate-3-phosphate (EPSP) to yield chorismate, which is the branch point compound that serves as the starting substrate for the three terminal pathways of aromatic amino acid biosynthesis. This reaction introduces a second double bond into the aromatic ring system. The chain is Chorismate synthase from Prochlorococcus marinus (strain SARG / CCMP1375 / SS120).